A 204-amino-acid polypeptide reads, in one-letter code: Terpene cyclase ausL (204 aa).

The next 5 membrane-spanning stretches (helical) occupy residues 19-39 (LSEM…LAMV), 49-69 (AIAV…AWIY), 75-95 (HWQG…AATL), 114-134 (LVLL…CLAL), and 138-158 (GALG…SAAV).

It belongs to the paxB family.

It is found in the membrane. It participates in secondary metabolite biosynthesis; terpenoid biosynthesis. Its function is as follows. Terpene cyclase; part of the gene cluster B that mediates the biosynthesis of austinol and dehydroaustinol, two fungal meroterpenoids. The first step of the pathway is the synthesis of 3,5-dimethylorsellinic acid by the polyketide synthase ausA. 3,5-dimethylorsellinic acid is then prenylated by the polyprenyl transferase ausN. Further epoxidation by the FAD-dependent monooxygenase ausM and cyclization by the probable terpene cyclase ausL lead to the formation of protoaustinoid A. Protoaustinoid A is then oxidized to spiro-lactone preaustinoid A3 by the combined action of the FAD-binding monooxygenases ausB and ausC, and the dioxygenase ausE. Acid-catalyzed keto-rearrangement and ring contraction of the tetraketide portion of preaustinoid A3 by ausJ lead to the formation of preaustinoid A4. The aldo-keto reductase ausK, with the help of ausH, is involved in the next step by transforming preaustinoid A4 into isoaustinone which is in turn hydroxylated by the P450 monooxygenase ausI to form austinolide. Finally, the cytochrome P450 monooxygenase ausG modifies austinolide to austinol. Austinol can be further modified to dehydroaustinol which forms a diffusible complex with diorcinol that initiates conidiation. Due to genetic rearrangements of the clusters and the subsequent loss of some enzymes, the end products of the Emericella nidulans austinoid biosynthesis clusters are austinol and dehydroaustinol, even if additional enzymes, such as the O-acetyltransferase ausQ and the cytochrome P450 monooxygenase ausR are still functional. This is Terpene cyclase ausL from Emericella nidulans (strain FGSC A4 / ATCC 38163 / CBS 112.46 / NRRL 194 / M139) (Aspergillus nidulans).